The following is a 393-amino-acid chain: uncharacterized protein (393 aa).

Belongs to the Gfo/Idh/MocA family.

This is an uncharacterized protein from Bacillus subtilis (strain 168).